We begin with the raw amino-acid sequence, 973 residues long: Nuclear factor NF-kappa-B p105 subunit (973 aa).

The 208-residue stretch at 38–245 (ADGPYLQILE…DAIYDSKAPN (208 aa)) folds into the RHD domain. Cys-60 carries the post-translational modification S-nitrosocysteine; alternate. Cys-60 carries S-(15-deoxy-Delta12,14-prostaglandin J2-9-yl)cysteine; alternate lipidation. Lys-324 participates in a covalent cross-link: Glycyl lysine isopeptide (Lys-Gly) (interchain with G-Cter in SUMO2). At Ser-336 the chain carries Phosphoserine. The short motif at 359 to 364 (QRKRQK) is the Nuclear localization signal element. Residues 371–394 (DSFGGGSGAGAGGGGMFGSGGGGG) form a GRR region. The interval 434 to 467 (TINTKFKNEPRDCAKSDDREILNPPEKETQGEGP) is disordered. The tract at residues 435–973 (INTKFKNEPR…GQDGPIEGKI (539 aa)) is interaction with CFLAR. The span at 439 to 463 (FKNEPRDCAKSDDREILNPPEKETQ) shows a compositional bias: basic and acidic residues. An N6-acetyllysine modification is found at Lys-440. Residue Ser-449 is modified to Phosphoserine. ANK repeat units follow at residues 540–570 (NGDSVLHLAIIHLHAQLVRDLLEVTSGSISD), 579–608 (LYQTPLHLAVITKQEDVVEDLLRVGADLSL), 612–641 (WGNSVLHLAAKEGHDKILGVLLKNSKAALL), 648–677 (EGLNAIHIAVMSNSLSCLQLLVAAGAEVNA), 682–711 (SGRTALHLAVEYDNISLAGCLLLEGDALVD), and 716–745 (DGTTPLHIAAGRGSTRLAALLKAAGADPLV). The interval 648-682 (EGLNAIHIAVMSNSLSCLQLLVAAGAEVNAQEQKS) is essential for interaction with HIF1AN. Asn-676 is subject to (3S)-3-hydroxyasparagine; by HIF1AN. The residue at position 757 (Ser-757) is a Phosphoserine. One copy of the ANK 7 repeat lies at 769-799 (PGTTPLDMAANWQVFDILNGKPYEPVFTSDD). Positions 803–890 (QGDIKQLTED…EAIEVIQAAF (88 aa)) constitute a Death domain. Ser-898 carries the post-translational modification Phosphoserine. Position 912 is a phosphoserine; by GSK3-beta; in vitro (Ser-912). Ser-928 is subject to Phosphoserine. 2 positions are modified to phosphoserine; by IKKB: Ser-932 and Ser-937. Ser-942 carries the phosphoserine modification. Thr-948 is modified (phosphothreonine).

In terms of assembly, component of the NF-kappa-B p65-p50 complex. Homodimer; component of the NF-kappa-B p50-p50 complex. Component of the NF-kappa-B p105-p50 complex. Component of the NF-kappa-B p50-c-Rel complex. Component of a complex consisting of the NF-kappa-B p50-p50 homodimer and BCL3. Also interacts with MAP3K8. NF-kappa-B p50 subunit interacts with NCOA3 coactivator, which may coactivate NF-kappa-B dependent expression via its histone acetyltransferase activity. Interacts with TSC22D3; this interaction prevents nuclear translocation and DNA-binding. Interacts with SPAG9 and UNC5CL. NFKB1/p105 interacts with CFLAR; the interaction inhibits p105 processing into p50. NFKB1/p105 forms a ternary complex with MAP3K8 and TNIP2. Interacts with GSK3B; the interaction prevents processing of p105 to p50. NFKB1/p50 interacts with NFKBIE. NFKB1/p50 interacts with NFKBIZ. Nuclear factor NF-kappa-B p50 subunit interacts with NFKBID. Directly interacts with MEN1. Interacts with HIF1AN. Interacts with FEM1A; interaction is direct. Post-translationally, generation of the NF-kappa-B p50 (Nuclear factor NF-kappa-B p50 subunit) transcription factor takes place both cotranslationally and post-translationally via non-mutually exclusive mechanisms. A cotranslational processing allows the production of both p50 and p105 (Nuclear factor NF-kappa-B p105 subunit) from a single NFKB1 mRNA. While translation occurs, the particular unfolded structure after the GRR repeat region acts as a substrate for the proteasome, promoting degradation of the C-terminus. The GRR acts as a proteasomal 'stop signal', protecting the region upstream of the GRR from degradation and promoting generation of p50. It is unclear if limited proteasome degradation during cotranslational processing depends on ubiquitination. NF-kappa-B p50 is also generated post-translationally following ubiquitination by the KPC complex, leading to limited processing by the proteasome downstream of the GRR region, thereby generating p50. In terms of processing, phosphorylation at the C-terminus by IKBKB/IKKB acts as a signal for ubiquitination and promotes either complete degradation or processing to generate the NF-kappa-B p50 (Nuclear factor NF-kappa-B p50 subunit). Phosphorylation at Ser-912 primes p105 for proteolytic processing in response to TNF-alpha stimulation. Phosphorylation at Ser-928, Ser-932 and Ser-937 are required for BTRC/BTRCP-mediated ubiquitination and proteolysis. Phosphorylation at Ser-932 is also required for ubiquitination by the KPC complex and limited processing to generate NF-kappa-B p50 (Nuclear factor NF-kappa-B p50 subunit). Polyubiquitinated at multiple Lys residues in the C-terminus. Polyubiquitinated by the SCF(FBXW11) and SCF(BTRC) complexes following phosphorylation at Ser-928, Ser-932 and Ser-937, leading to its complete degradation. In contrast, polyubiquitination by the KPC complex following phosphorylation at Ser-932 leads to limited proteosomal processing and generation of the active NF-kappa-B p50 (Nuclear factor NF-kappa-B p50 subunit). Post-translationally, S-nitrosylation of Cys-60 affects DNA binding. In terms of processing, the covalent modification of cysteine by 15-deoxy-Delta12,14-prostaglandin-J2 is autocatalytic and reversible. It may occur as an alternative to other cysteine modifications, such as S-nitrosylation and S-palmitoylation.

It is found in the cytoplasm. It localises to the nucleus. In terms of biological role, NF-kappa-B is a pleiotropic transcription factor present in almost all cell types and is the endpoint of a series of signal transduction events that are initiated by a vast array of stimuli related to many biological processes such as inflammation, immunity, differentiation, cell growth, tumorigenesis and apoptosis. NF-kappa-B is a homo- or heterodimeric complex formed by the Rel-like domain-containing proteins RELA/p65, RELB, NFKB1/p105, NFKB1/p50, REL and NFKB2/p52 and the heterodimeric p65-p50 complex appears to be most abundant one. The dimers bind at kappa-B sites in the DNA of their target genes and the individual dimers have distinct preferences for different kappa-B sites that they can bind with distinguishable affinity and specificity. Different dimer combinations act as transcriptional activators or repressors, respectively. NF-kappa-B is controlled by various mechanisms of post-translational modification and subcellular compartmentalization as well as by interactions with other cofactors or corepressors. NF-kappa-B complexes are held in the cytoplasm in an inactive state complexed with members of the NF-kappa-B inhibitor (I-kappa-B) family. In a conventional activation pathway, I-kappa-B is phosphorylated by I-kappa-B kinases (IKKs) in response to different activators, subsequently degraded thus liberating the active NF-kappa-B complex which translocates to the nucleus. NF-kappa-B heterodimeric p65-p50 and RelB-p50 complexes are transcriptional activators. The NF-kappa-B p50-p50 homodimer is a transcriptional repressor, but can act as a transcriptional activator when associated with BCL3. NFKB1 appears to have dual functions such as cytoplasmic retention of attached NF-kappa-B proteins by p105 and generation of p50 by a cotranslational processing. The proteasome-mediated process ensures the production of both p50 and p105 and preserves their independent function, although processing of NFKB1/p105 also appears to occur post-translationally. p50 binds to the kappa-B consensus sequence 5'-GGRNNYYCC-3', located in the enhancer region of genes involved in immune response and acute phase reactions. In a complex with MAP3K8, NFKB1/p105 represses MAP3K8-induced MAPK signaling; active MAP3K8 is released by proteasome-dependent degradation of NFKB1/p105. P105 is the precursor of the active p50 subunit (Nuclear factor NF-kappa-B p50 subunit) of the nuclear factor NF-kappa-B. Acts as a cytoplasmic retention of attached NF-kappa-B proteins by p105. Its function is as follows. Constitutes the active form, which associates with RELA/p65 to form the NF-kappa-B p65-p50 complex to form a transcription factor. Together with RELA/p65, binds to the kappa-B consensus sequence 5'-GGRNNYYCC-3', located in the enhancer region of genes involved in immune response and acute phase reactions. The sequence is that of Nuclear factor NF-kappa-B p105 subunit (Nfkb1) from Rattus norvegicus (Rat).